The following is a 463-amino-acid chain: ATP synthase subunit beta (463 aa).

Residue 152-159 (GGAGVGKT) participates in ATP binding.

This sequence belongs to the ATPase alpha/beta chains family. As to quaternary structure, F-type ATPases have 2 components, CF(1) - the catalytic core - and CF(0) - the membrane proton channel. CF(1) has five subunits: alpha(3), beta(3), gamma(1), delta(1), epsilon(1). CF(0) has three main subunits: a(1), b(2) and c(9-12). The alpha and beta chains form an alternating ring which encloses part of the gamma chain. CF(1) is attached to CF(0) by a central stalk formed by the gamma and epsilon chains, while a peripheral stalk is formed by the delta and b chains.

Its subcellular location is the cell inner membrane. The enzyme catalyses ATP + H2O + 4 H(+)(in) = ADP + phosphate + 5 H(+)(out). Its function is as follows. Produces ATP from ADP in the presence of a proton gradient across the membrane. The catalytic sites are hosted primarily by the beta subunits. This is ATP synthase subunit beta from Shewanella sp. (strain ANA-3).